A 428-amino-acid chain; its full sequence is Cell division protein DamX (428 aa).

The disordered stretch occupies residues 1–99; it reads MDEFKPEDEL…KRKKAASKPA (99 aa). Topologically, residues 1-103 are cytoplasmic; the sequence is MDEFKPEDEL…AASKPASRQY (103 aa). Basic and acidic residues-rich tracts occupy residues 7 to 36 and 50 to 64; these read EDEL…ERGE and DDRR…RNEE. Residues 55–87 adopt a coiled-coil conformation; that stretch reads TRAQKERNEEPEIEEEIDESEDETVDEERVERR. Residues 65–82 are compositionally biased toward acidic residues; that stretch reads PEIEEEIDESEDETVDEE. Over residues 86-95 the composition is skewed to basic residues; it reads RRPRKRKKAA. The helical transmembrane segment at 104 to 124 threads the bilayer; that stretch reads MMMGVGILVLLLLIIGIGSAL. The Periplasmic segment spans residues 125 to 428; that stretch reads KAPSTTSSDQ…PLRQVQADLK (304 aa). Disordered regions lie at residues 149–190 and 226–344; these read TDQA…VATD and EPAT…KSAP. Residues 236–257 show a composition bias toward polar residues; it reads GNASRDTAKTQTAERPSTTRPA. Residues 288 to 334 show a composition bias toward low complexity; that stretch reads PAAPVASTKAPAATSTPAPKETATTAPVQTASPAQTTATPAAGAKTA. The region spanning 342-419 is the SPOR domain; sequence SAPSSHYTLQ…VQAKNPWAKP (78 aa).

It belongs to the DamX family. As to quaternary structure, interacts in vitro with multiple Fts proteins, including FtsQ and FtsN.

Its subcellular location is the cell inner membrane. Non-essential cell division protein. The sequence is that of Cell division protein DamX from Escherichia coli (strain K12).